The chain runs to 340 residues: GTP 3',8-cyclase (340 aa).

One can recognise a Radical SAM core domain in the interval 8–227 (KLGRPIRDLR…TMIEQHFEID (220 aa)). Arginine 17 contacts GTP. [4Fe-4S] cluster contacts are provided by cysteine 24 and cysteine 28. Tyrosine 30 contacts S-adenosyl-L-methionine. Cysteine 31 provides a ligand contact to [4Fe-4S] cluster. Arginine 71 provides a ligand contact to GTP. An S-adenosyl-L-methionine-binding site is contributed by glycine 75. Position 102 (threonine 102) interacts with GTP. Residue serine 126 coordinates S-adenosyl-L-methionine. GTP is bound at residue lysine 163. Position 197 (methionine 197) interacts with S-adenosyl-L-methionine. 2 residues coordinate [4Fe-4S] cluster: cysteine 261 and cysteine 264. 266–268 (RAR) contacts GTP. Cysteine 278 contributes to the [4Fe-4S] cluster binding site.

It belongs to the radical SAM superfamily. MoaA family. Monomer and homodimer. Requires [4Fe-4S] cluster as cofactor.

It carries out the reaction GTP + AH2 + S-adenosyl-L-methionine = (8S)-3',8-cyclo-7,8-dihydroguanosine 5'-triphosphate + 5'-deoxyadenosine + L-methionine + A + H(+). It participates in cofactor biosynthesis; molybdopterin biosynthesis. In terms of biological role, catalyzes the cyclization of GTP to (8S)-3',8-cyclo-7,8-dihydroguanosine 5'-triphosphate. This chain is GTP 3',8-cyclase, found in Staphylococcus aureus (strain USA300).